Reading from the N-terminus, the 165-residue chain is Neuritin-like protein (165 aa).

Residues 1–35 (MMRCCRRRCCCRQPPHALRPLLLLPLVLLPPLAAA) form the signal peptide. Residue Ala-139 is the site of GPI-anchor amidated alanine attachment. A propeptide spans 140-165 (PALPMAPAPPLLAAALALAYLLRPLA) (removed in mature form).

This sequence belongs to the neuritin family.

The protein localises to the cell membrane. The polypeptide is Neuritin-like protein (NRN1L) (Homo sapiens (Human)).